A 375-amino-acid chain; its full sequence is MSSGHAEVVGGGIGGLTAATALALRGWTVRLHERDTRIRTVGAGIYVWDNGLEALDTIGAAAEGLDDAYEAPAITVRASDGRPLYRIDVNQPGGARCVTLLRDRLIGALHVAAEHAGVEVCTGSAAVSATADGTVEFSTGTSTRADLVVAADGVHSLLRDRLGISYRRIRMRQGAARVMVSGERPFIPGMDVDQHHEFLGGRRRLLYTPCTATQTYLAFVADNDDTATVGPELDLAAWARAFPLLVPVFDAARGRALIRWDNFELIRLSTWSHGRVAVLGDAAHAQPPYVGQGGGTAMNSAVGLAAAVSESADVEDGLNRWEQALRPPIEKAQTTSYRMRLIGSVPEVLRGPLLGALGRSRSSATSQLIKKRSAA.

It belongs to the 3-hydroxybenzoate 6-hydroxylase family.

The catalysed reaction is 2-heptyl-4(1H)-quinolone + NADH + O2 + H(+) = 2-heptyl-3-hydroxy-4(1H)-quinolone + NAD(+) + H2O. Its function is as follows. Involved in the degradation pathway of the Pseudomonas aeruginosa quorum sensing signal molecule HHQ (2-heptyl-4(1H)-quinolone) to anthranilate. Catalyzes the hydroxylation of HHQ to PQS (2-heptyl-3-hydroxy-4(1H)-quinolone). This is 2-heptyl-3-hydroxy-4(1H)-quinolone synthase from Mycobacteroides abscessus (strain ATCC 19977 / DSM 44196 / CCUG 20993 / CIP 104536 / JCM 13569 / NCTC 13031 / TMC 1543 / L948) (Mycobacterium abscessus).